Here is a 167-residue protein sequence, read N- to C-terminus: Shikimate kinase (167 aa).

12–17 (GSGKTT) contributes to the ATP binding site. Mg(2+) is bound at residue threonine 16. Residues aspartate 34, arginine 58, and glycine 80 each contribute to the substrate site. Arginine 117 is a binding site for ATP. Residue arginine 135 coordinates substrate. Arginine 152 is a binding site for ATP.

This sequence belongs to the shikimate kinase family. As to quaternary structure, monomer. It depends on Mg(2+) as a cofactor.

The protein localises to the cytoplasm. It carries out the reaction shikimate + ATP = 3-phosphoshikimate + ADP + H(+). Its pathway is metabolic intermediate biosynthesis; chorismate biosynthesis; chorismate from D-erythrose 4-phosphate and phosphoenolpyruvate: step 5/7. Its function is as follows. Catalyzes the specific phosphorylation of the 3-hydroxyl group of shikimic acid using ATP as a cosubstrate. This is Shikimate kinase from Salinispora arenicola (strain CNS-205).